The chain runs to 459 residues: Cyclooctatin synthase (459 aa).

A heme-binding site is contributed by Cys-408.

Belongs to the cytochrome P450 family. Requires heme as cofactor.

It carries out the reaction cyclooctat-9-ene-5,7-diol + AH2 + O2 = cyclooctatin + A + H2O. Functionally, involved in the biosynthesis of cyclooctatin, a potent inhibitor of lysophospholipase. Catalyzes the hydroxylation of cyclooctat-9-ene-5,7-diol at C-18 to yield the final product, cyclooctatin. The chain is Cyclooctatin synthase from Streptomyces melanosporofaciens.